Here is a 213-residue protein sequence, read N- to C-terminus: Probable nicotinate-nucleotide adenylyltransferase (213 aa).

Belongs to the NadD family.

It catalyses the reaction nicotinate beta-D-ribonucleotide + ATP + H(+) = deamido-NAD(+) + diphosphate. It participates in cofactor biosynthesis; NAD(+) biosynthesis; deamido-NAD(+) from nicotinate D-ribonucleotide: step 1/1. Its function is as follows. Catalyzes the reversible adenylation of nicotinate mononucleotide (NaMN) to nicotinic acid adenine dinucleotide (NaAD). The sequence is that of Probable nicotinate-nucleotide adenylyltransferase from Ruegeria pomeroyi (strain ATCC 700808 / DSM 15171 / DSS-3) (Silicibacter pomeroyi).